The primary structure comprises 249 residues: 2,3-bisphosphoglycerate-dependent phosphoglycerate mutase (249 aa).

Substrate contacts are provided by residues 7 to 14 (RHGESEWN), 20 to 21 (TG), arginine 59, 86 to 89 (ERHY), lysine 97, 113 to 114 (RR), and 182 to 183 (GN). The active-site Tele-phosphohistidine intermediate is the histidine 8. Glutamate 86 functions as the Proton donor/acceptor in the catalytic mechanism.

It belongs to the phosphoglycerate mutase family. BPG-dependent PGAM subfamily.

The catalysed reaction is (2R)-2-phosphoglycerate = (2R)-3-phosphoglycerate. It participates in carbohydrate degradation; glycolysis; pyruvate from D-glyceraldehyde 3-phosphate: step 3/5. Catalyzes the interconversion of 2-phosphoglycerate and 3-phosphoglycerate. This chain is 2,3-bisphosphoglycerate-dependent phosphoglycerate mutase, found in Lachnoclostridium phytofermentans (strain ATCC 700394 / DSM 18823 / ISDg) (Clostridium phytofermentans).